Here is an 88-residue protein sequence, read N- to C-terminus: Small ribosomal subunit protein bS16 (88 aa).

Belongs to the bacterial ribosomal protein bS16 family.

This Anaeromyxobacter sp. (strain K) protein is Small ribosomal subunit protein bS16.